Here is a 685-residue protein sequence, read N- to C-terminus: Sodium/glucose cotransporter 4 (685 aa).

Residues 1–20 (MNTELVAMEPGVSRNGVRTE) form a disordered region. At 1-32 (MNTELVAMEPGVSRNGVRTETTTNPSLGLHTY) the chain is on the extracellular side. Residues 33 to 53 (DIVVVVIYFVFVLAVGIWSSI) traverse the membrane as a helical segment. The Cytoplasmic portion of the chain corresponds to 54–71 (RASRGTVGGYFLAGRSMT). A helical membrane pass occupies residues 72 to 94 (WWPIGASLMSSNVGSGLFIGLAG). Over 95-110 (TGAAGGLAVGGFEWNA) the chain is Extracellular. Residues 111–131 (TFLLLALGWIFVPVYIAAGVV) form a helical membrane-spanning segment. The Cytoplasmic segment spans residues 132–153 (TMPQYLKKRFGGQRIQVYMSVL). A helical transmembrane segment spans residues 154 to 174 (SLILYIFTKISTDIFSGALFI). The Extracellular segment spans residues 175-186 (QMALGWNLYLST). The helical transmembrane segment at 187 to 207 (VILLVVTAVYTIAGGLTAVIY) threads the bilayer. Topologically, residues 208–213 (TDALQT) are cytoplasmic. A helical membrane pass occupies residues 214–234 (VIMVGGALVLMFLGFQEVGWY). Topologically, residues 235 to 271 (PGLQQLYRQAIPNTTVPNTTCHLPRPDAFHMLRDPVN) are extracellular. N247 carries N-linked (GlcNAc...) asparagine glycosylation. A helical transmembrane segment spans residues 272–292 (GDIPWPGLIFGLTVLATWCWC). Topologically, residues 293 to 313 (TDQVIVQRSLAAKNLSHAKGG) are cytoplasmic. A helical membrane pass occupies residues 314-334 (SVLGGYLKILPMFFIVMPGMI). Topologically, residues 335–379 (SRALYPDEVACVDPDICQRVCGARVGCSNIAYPKLVMALMPVGLR) are extracellular. A helical transmembrane segment spans residues 380-402 (GLMIAVIMAALMSSLTSIFNSSS). Residues 403–423 (TLFAIDVWQRFRRQASEQELM) are Cytoplasmic-facing. Residues 424–444 (VVGRLFVVFLVVISILWIPII) traverse the membrane as a helical segment. Residues 445-455 (QSSNSGQLFDY) lie on the Extracellular side of the membrane. A helical membrane pass occupies residues 456-476 (IQSITSYLAPPITALFLLAIF). Residues 477–483 (CKRVNEP) lie on the Cytoplasmic side of the membrane. A helical transmembrane segment spans residues 484 to 504 (GAFWGLMFGLVVGILRMILEF). Residues 505 to 526 (SYSAPACGEMDRRPAVLKDFHY) are Extracellular-facing. Residues 527–547 (LYFALLLCGLTAIIIVVISFF) traverse the membrane as a helical segment. The Cytoplasmic segment spans residues 548-664 (TEPIPDDKLA…SIEEEPLWRR (117 aa)). Residues 577-616 (VSVNNTEDDNSPGLAGRPVVEGPAGDEEEANTTQGPEQPG) are disordered. A helical transmembrane segment spans residues 665-685 (VCNINAIILLAINIFLWGYFA).

It belongs to the sodium:solute symporter (SSF) (TC 2.A.21) family.

It is found in the cell membrane. The enzyme catalyses D-mannose(out) + n Na(+)(out) = D-mannose(in) + n Na(+)(in). Its function is as follows. Electrogenic Na(+)-coupled sugar symporter that may play a primary role in D-mannose and possibly D-fructose and D-glucose transport at the plasma membrane. Transporter activity is driven by a transmembrane Na(+) electrochemical gradient set by the Na(+)/K(+) pump. Exclusively recognizes sugar substrates having a pyranose ring with an axial hydroxyl group on carbon 2. The protein is Sodium/glucose cotransporter 4 (Slc5a9) of Mus musculus (Mouse).